Reading from the N-terminus, the 327-residue chain is Sideroflexin-2 (327 aa).

5 consecutive transmembrane segments (helical) span residues 99–119 (GMLI…VVLW), 143–163 (VTQL…AAIG), 175–195 (LFQR…NIPL), 228–248 (EVVV…PLIM), and 267–287 (FQTL…CALF).

Belongs to the sideroflexin family.

The protein localises to the mitochondrion membrane. The catalysed reaction is L-serine(in) = L-serine(out). In terms of biological role, mitochondrial amino-acid transporter that mediates transport of serine into mitochondria. The chain is Sideroflexin-2 from Drosophila melanogaster (Fruit fly).